Reading from the N-terminus, the 352-residue chain is Transcription factor BHLH156 (352 aa).

The interval 59-141 (GGDDDDNGGV…RSKTIVSERK (83 aa)) is disordered. Residues 130 to 143 (RDRSKTIVSERKRR) form a basic motif region. The bHLH domain maps to 130–179 (RDRSKTIVSERKRRVRMKEKLYELRALVPNITKMDKASIIADAVVYVKDL). Residues 144 to 179 (VRMKEKLYELRALVPNITKMDKASIIADAVVYVKDL) are helix-loop-helix motif. The disordered stretch occupies residues 194 to 216 (EEARPIRPPPPSAAAQRPQRQPR). A compositionally biased stretch (low complexity) spans 206 to 216 (AAAQRPQRQPR).

The protein belongs to the bHLH protein family. As to quaternary structure, forms homodimers. Interacts with IRO2 in the nucleus. As to expression, expressed in the meristematic zone of lateral and primary roots.

Its subcellular location is the nucleus. Transcription factor involved in positive regulation of genes involved in strategy II iron acquisition, including genes for mugineic acid (MA) family phytosiderophores biosynthesis, and genes involved in S-adenosylmethionine cycle and iron transport. May play a role in the regulation of iron deficiency response by promoting the nuclear localization of IRO2. Possesses transactivation activity in yeast. This is Transcription factor BHLH156 from Oryza sativa subsp. japonica (Rice).